We begin with the raw amino-acid sequence, 107 residues long: Nucleoid-associated protein Rru_A3472 (107 aa).

Belongs to the YbaB/EbfC family. In terms of assembly, homodimer.

Its subcellular location is the cytoplasm. It is found in the nucleoid. Binds to DNA and alters its conformation. May be involved in regulation of gene expression, nucleoid organization and DNA protection. This chain is Nucleoid-associated protein Rru_A3472, found in Rhodospirillum rubrum (strain ATCC 11170 / ATH 1.1.1 / DSM 467 / LMG 4362 / NCIMB 8255 / S1).